We begin with the raw amino-acid sequence, 377 residues long: Erythronate-4-phosphate dehydrogenase (377 aa).

Ser-45 and Thr-67 together coordinate substrate. Residues 127-128, Asp-147, and Thr-176 each bind NAD(+); that span reads QV. Arg-209 is an active-site residue. Asp-233 lines the NAD(+) pocket. Glu-238 is a catalytic residue. His-255 acts as the Proton donor in catalysis. Gly-258 contributes to the NAD(+) binding site. Residue Tyr-259 coordinates substrate.

The protein belongs to the D-isomer specific 2-hydroxyacid dehydrogenase family. PdxB subfamily. Homodimer.

The protein localises to the cytoplasm. The catalysed reaction is 4-phospho-D-erythronate + NAD(+) = (R)-3-hydroxy-2-oxo-4-phosphooxybutanoate + NADH + H(+). It participates in cofactor biosynthesis; pyridoxine 5'-phosphate biosynthesis; pyridoxine 5'-phosphate from D-erythrose 4-phosphate: step 2/5. Functionally, catalyzes the oxidation of erythronate-4-phosphate to 3-hydroxy-2-oxo-4-phosphonooxybutanoate. In Vibrio atlanticus (strain LGP32) (Vibrio splendidus (strain Mel32)), this protein is Erythronate-4-phosphate dehydrogenase.